A 657-amino-acid chain; its full sequence is Probable potassium transport system protein Kup (657 aa).

The next 12 helical transmembrane spans lie at 14–34, 47–67, 96–116, 140–160, 166–186, 201–221, 242–262, 283–303, 340–360, 371–391, 396–416, and 425–445; these read IGGLLITLGIIYGDIGTSPLY, ADIVLGGISCVFWTLTLQTTI, IQWLIVPAIIGGSALLADGII, TIVYIVITILFILFTIQQFGT, FFAPMMLIWFAMLGTLGFIQI, AYHLLSVHPDGFFVLGFVFLC, ISWIFVKTTLVLNYFGQAAYL, LIMPHWFLPFGIVVATLAAVI, LYIPSINWLLFFGCVGIVLHF, GLAIILCMIMTTILLNYYLIM, LYFMVPLITIYLLIEFSFLIA, and GYVTLIIAILLISIMTIWYLA.

It belongs to the HAK/KUP transporter (TC 2.A.72) family.

It is found in the cell inner membrane. The catalysed reaction is K(+)(in) + H(+)(in) = K(+)(out) + H(+)(out). Transport of potassium into the cell. Likely operates as a K(+):H(+) symporter. The sequence is that of Probable potassium transport system protein Kup from Flavobacterium johnsoniae (strain ATCC 17061 / DSM 2064 / JCM 8514 / BCRC 14874 / CCUG 350202 / NBRC 14942 / NCIMB 11054 / UW101) (Cytophaga johnsonae).